The sequence spans 178 residues: PRA1 family protein 2 (178 aa).

Residues M1–L41 are Cytoplasmic-facing. A helical transmembrane segment spans residues L42–V62. Residues R63–P64 are Extracellular-facing. The chain crosses the membrane as a helical span at residues L65–A85. Topologically, residues E86–R96 are cytoplasmic. Residues S97–G119 traverse the membrane as a helical segment. Residues A120–T122 lie on the Extracellular side of the membrane. A helical membrane pass occupies residues F123–L140. Over R141–S178 the chain is Cytoplasmic.

Belongs to the PRA1 family. In terms of assembly, interacts with CCR5 and GDE1.

It localises to the endosome membrane. Its function is as follows. May be involved in ER/Golgi transport and vesicular traffic. Plays a proapoptotic role in cerulenin-induced neuroblastoma apoptosis. In Macaca fascicularis (Crab-eating macaque), this protein is PRA1 family protein 2 (PRAF2).